A 343-amino-acid chain; its full sequence is Glycogen biosynthesis protein GlgD (343 aa).

It belongs to the bacterial/plant glucose-1-phosphate adenylyltransferase family.

In terms of biological role, required for the synthesis of glycogen. In Geobacillus stearothermophilus (Bacillus stearothermophilus), this protein is Glycogen biosynthesis protein GlgD (glgD).